The sequence spans 297 residues: Succinate dehydrogenase [ubiquinone] iron-sulfur subunit, mitochondrial (297 aa).

The disordered stretch occupies residues 33-55 (TAEALSASRPPIKETKTSTVKEP). Positions 78–157 (DKPRMQSYTL…ETRIYPLPHT (80 aa)) constitute a 2Fe-2S ferredoxin-type domain. Cys117, Cys122, Cys125, and Cys137 together coordinate [2Fe-2S] cluster. Residues 199–229 (DRKKLDGLYECILCACCSTSCPSYWWNSEEY) form the 4Fe-4S ferredoxin-type domain. [4Fe-4S] cluster-binding residues include Cys209, Cys212, and Cys215. Cys219 is a binding site for [3Fe-4S] cluster. Trp224 is a binding site for a ubiquinone. [3Fe-4S] cluster-binding residues include Cys266 and Cys272. Cys276 contributes to the [4Fe-4S] cluster binding site.

This sequence belongs to the succinate dehydrogenase/fumarate reductase iron-sulfur protein family. As to quaternary structure, component of complex II composed of four subunits: a flavoprotein (FP), an iron-sulfur protein (IP), and a cytochrome b composed of a large and a small subunit. Requires [2Fe-2S] cluster as cofactor. [3Fe-4S] cluster is required as a cofactor. The cofactor is [4Fe-4S] cluster.

It is found in the mitochondrion inner membrane. The enzyme catalyses a quinone + succinate = fumarate + a quinol. It participates in carbohydrate metabolism; tricarboxylic acid cycle; fumarate from succinate (eukaryal route): step 1/1. In terms of biological role, iron-sulfur protein (IP) subunit of succinate dehydrogenase (SDH) that is involved in complex II of the mitochondrial electron transport chain and is responsible for transferring electrons from succinate to ubiquinone (coenzyme Q). The protein is Succinate dehydrogenase [ubiquinone] iron-sulfur subunit, mitochondrial (SDH2) of Zymoseptoria tritici (Speckled leaf blotch fungus).